Consider the following 638-residue polypeptide: Zinc finger protein 143 (638 aa).

Met1 carries the N-acetylmethionine modification. A Glycyl lysine isopeptide (Lys-Gly) (interchain with G-Cter in SUMO2) cross-link involves residue Lys213. C2H2-type zinc fingers lie at residues Phe237 to His261, Tyr267 to His291, Tyr297 to His321, and Phe327 to His351. The residue at position 352 (Thr352) is a Phosphothreonine. C2H2-type zinc fingers lie at residues Tyr357–His381, Tyr387–His411, and Tyr417–His440. Lys406 is covalently cross-linked (Glycyl lysine isopeptide (Lys-Gly) (interchain with G-Cter in SUMO2)).

The protein belongs to the GLI C2H2-type zinc-finger protein family. Interacts with CHD8. Forms a complex with HCFC1 and ZNF143.

It localises to the nucleus. Its function is as follows. Transcriptional activator. Activates the gene for selenocysteine tRNA (tRNAsec). Binds to the SPH motif of small nuclear RNA (snRNA) gene promoters. Participates in efficient U6 RNA polymerase III transcription via its interaction with CHD8. In complex with HCFC1 and ZNF143, regulates the expression of several genes, including AP2S1, ESCO2, OPHN1, RBL1, UBXN8 and ZNF32. This chain is Zinc finger protein 143 (Znf143), found in Mus musculus (Mouse).